Reading from the N-terminus, the 336-residue chain is Coproporphyrin III ferrochelatase (336 aa).

S52 and Y116 together coordinate Fe-coproporphyrin III. Fe(2+) is bound by residues H176 and E259.

This sequence belongs to the ferrochelatase family.

The protein localises to the cytoplasm. The catalysed reaction is Fe-coproporphyrin III + 2 H(+) = coproporphyrin III + Fe(2+). The protein operates within porphyrin-containing compound metabolism; protoheme biosynthesis. Its function is as follows. Involved in coproporphyrin-dependent heme b biosynthesis. Catalyzes the insertion of ferrous iron into coproporphyrin III to form Fe-coproporphyrin III. The polypeptide is Coproporphyrin III ferrochelatase (Mycobacterium leprae (strain Br4923)).